Here is a 438-residue protein sequence, read N- to C-terminus: Cyclic 2,3-diphosphoglycerate synthetase (438 aa).

This sequence belongs to the cyclic 2,3-diphosphoglycerate synthetase family.

The protein resides in the cytoplasm. It carries out the reaction (2R)-2,3-bisphosphoglycerate + ATP + H(+) = cyclic (2R)-2,3-bisphosphoglycerate + ADP + phosphate. In terms of biological role, catalyzes the formation of cyclic 2,3-diphosphoglycerate (cDPG) by formation of an intramolecular phosphoanhydride bond at the expense of ATP. The protein is Cyclic 2,3-diphosphoglycerate synthetase of Thermococcus gammatolerans (strain DSM 15229 / JCM 11827 / EJ3).